Consider the following 81-residue polypeptide: Cytochrome b559 subunit alpha (81 aa).

Heme is bound by residues arginine 18 and histidine 23. Residues 19–40 traverse the membrane as a helical segment; the sequence is YWVIHSITIPMLFIAGWLFVST.

This sequence belongs to the PsbE/PsbF family. In terms of assembly, heterodimer of an alpha subunit and a beta subunit. PSII is composed of 1 copy each of membrane proteins PsbA, PsbB, PsbC, PsbD, PsbE, PsbF, PsbH, PsbI, PsbJ, PsbK, PsbL, PsbM, PsbT, PsbX, PsbY, PsbZ, Psb30/Ycf12, peripheral proteins PsbO, CyanoQ (PsbQ), PsbU, PsbV and a large number of cofactors. It forms dimeric complexes. Heme b is required as a cofactor.

Its subcellular location is the cellular thylakoid membrane. Its function is as follows. This b-type cytochrome is tightly associated with the reaction center of photosystem II (PSII). PSII is a light-driven water:plastoquinone oxidoreductase that uses light energy to abstract electrons from H(2)O, generating O(2) and a proton gradient subsequently used for ATP formation. It consists of a core antenna complex that captures photons, and an electron transfer chain that converts photonic excitation into a charge separation. This chain is Cytochrome b559 subunit alpha, found in Synechocystis sp. (strain ATCC 27184 / PCC 6803 / Kazusa).